We begin with the raw amino-acid sequence, 426 residues long: Glutamate-1-semialdehyde 2,1-aminomutase (426 aa).

Lys265 is subject to N6-(pyridoxal phosphate)lysine.

This sequence belongs to the class-III pyridoxal-phosphate-dependent aminotransferase family. HemL subfamily. As to quaternary structure, homodimer. The cofactor is pyridoxal 5'-phosphate.

The protein resides in the cytoplasm. It carries out the reaction (S)-4-amino-5-oxopentanoate = 5-aminolevulinate. It functions in the pathway porphyrin-containing compound metabolism; protoporphyrin-IX biosynthesis; 5-aminolevulinate from L-glutamyl-tRNA(Glu): step 2/2. This is Glutamate-1-semialdehyde 2,1-aminomutase from Escherichia coli (strain SMS-3-5 / SECEC).